We begin with the raw amino-acid sequence, 323 residues long: Methionine adenosyltransferase 2 subunit beta (323 aa).

NADP(+)-binding positions include 26–29 (TGLL), 49–51 (YNR), 60–61 (NL), cysteine 82, arginine 86, tyrosine 146, and leucine 172. Residues 308-323 (LWPFQHDKRWRQTVFH) form a required for interaction with MAT2A region.

The protein belongs to the dTDP-4-dehydrorhamnose reductase family. MAT2B subfamily. As to quaternary structure, heterotrimer; composed of a catalytic mat2a homodimer that binds one regulatory mat2b chain. Heterohexamer; composed of a central, catalytic mat2a homotetramer flanked on either side by a regulatory mat2b chain. NADP binding increases the affinity for mat2a.

It functions in the pathway amino-acid biosynthesis; S-adenosyl-L-methionine biosynthesis; S-adenosyl-L-methionine from L-methionine: step 1/1. Its function is as follows. Regulatory subunit of S-adenosylmethionine synthetase 2, an enzyme that catalyzes the formation of S-adenosylmethionine from methionine and ATP. Regulates MAT2A catalytic activity by changing its kinetic properties, increasing its affinity for L-methionine. Can bind NADP (in vitro). This is Methionine adenosyltransferase 2 subunit beta (mat2b) from Danio rerio (Zebrafish).